Here is a 270-residue protein sequence, read N- to C-terminus: Cell surface glycoprotein CD200 receptor 4 (270 aa).

Positions 1-25 (MHALGRIPTLTLLIFINIFVSGSSC) are cleaved as a signal peptide. Residues 26 to 145 (TDENQTIQND…GNLEKVYDLQ (120 aa)) form the Ig-like V-type domain. Residues 26-241 (TDENQTIQND…TMTTPRSLLT (216 aa)) are Extracellular-facing. Asparagine 29 and asparagine 44 each carry an N-linked (GlcNAc...) asparagine glycan. Intrachain disulfides connect cysteine 58–cysteine 129, cysteine 82–cysteine 97, cysteine 164–cysteine 213, and cysteine 183–cysteine 201. Residues 134–229 (PEGNLEKVYD…GNQSLSIELS (96 aa)) form the Ig-like C2-type domain. Asparagine 192 carries an N-linked (GlcNAc...) asparagine glycan. Residues 242-262 (ILYVKMALLVIILLNVGFAFF) form a helical membrane-spanning segment. Residues 263 to 270 (QKRNFART) are Cytoplasmic-facing.

This sequence belongs to the CD200R family. Interacts with TYROBP. Highly expressed in monocytes, NK cells and a subset of NKT cells. Weakly expressed in granulocytes and B-cells (at protein level). Expressed in brain, lung, testis, thymus, intestine and uterus. Expressed in bone marrow derived-macrophage and dendritic cells and mast cells.

The protein resides in the membrane. Involved in the recruitment or surface expression of the TYROBP receptor. This is Cell surface glycoprotein CD200 receptor 4 (Cd200r4) from Mus musculus (Mouse).